Here is a 187-residue protein sequence, read N- to C-terminus: Small ribosomal subunit protein uS7 (187 aa).

The protein belongs to the universal ribosomal protein uS7 family. In terms of assembly, part of the 30S ribosomal subunit.

In terms of biological role, one of the primary rRNA binding proteins, it binds directly to 16S rRNA where it nucleates assembly of the head domain of the 30S subunit. Is located at the subunit interface close to the decoding center. The polypeptide is Small ribosomal subunit protein uS7 (Methanosphaera stadtmanae (strain ATCC 43021 / DSM 3091 / JCM 11832 / MCB-3)).